The following is a 401-amino-acid chain: Imidazolonepropionase (401 aa).

Positions 70 and 72 each coordinate Fe(3+). Histidine 70 and histidine 72 together coordinate Zn(2+). Arginine 79, tyrosine 142, and histidine 175 together coordinate 4-imidazolone-5-propanoate. Tyrosine 142 contacts N-formimidoyl-L-glutamate. Position 240 (histidine 240) interacts with Fe(3+). Histidine 240 contacts Zn(2+). Glutamine 243 lines the 4-imidazolone-5-propanoate pocket. Aspartate 315 contributes to the Fe(3+) binding site. Aspartate 315 lines the Zn(2+) pocket. N-formimidoyl-L-glutamate-binding residues include asparagine 317 and glycine 319. 4-imidazolone-5-propanoate is bound at residue serine 320.

Belongs to the metallo-dependent hydrolases superfamily. HutI family. Zn(2+) is required as a cofactor. It depends on Fe(3+) as a cofactor.

Its subcellular location is the cytoplasm. The enzyme catalyses 4-imidazolone-5-propanoate + H2O = N-formimidoyl-L-glutamate. Its pathway is amino-acid degradation; L-histidine degradation into L-glutamate; N-formimidoyl-L-glutamate from L-histidine: step 3/3. In terms of biological role, catalyzes the hydrolytic cleavage of the carbon-nitrogen bond in imidazolone-5-propanoate to yield N-formimidoyl-L-glutamate. It is the third step in the universal histidine degradation pathway. The protein is Imidazolonepropionase of Ruegeria pomeroyi (strain ATCC 700808 / DSM 15171 / DSS-3) (Silicibacter pomeroyi).